Consider the following 529-residue polypeptide: Peptide chain release factor 3 (529 aa).

In terms of domain architecture, tr-type G spans Ala11 to Met280. GTP is bound by residues Ser20 to Thr27, Asp88 to His92, and Asn142 to Asp145.

The protein belongs to the TRAFAC class translation factor GTPase superfamily. Classic translation factor GTPase family. PrfC subfamily.

The protein localises to the cytoplasm. Its function is as follows. Increases the formation of ribosomal termination complexes and stimulates activities of RF-1 and RF-2. It binds guanine nucleotides and has strong preference for UGA stop codons. It may interact directly with the ribosome. The stimulation of RF-1 and RF-2 is significantly reduced by GTP and GDP, but not by GMP. The sequence is that of Peptide chain release factor 3 from Edwardsiella ictaluri (strain 93-146).